The following is an 89-amino-acid chain: Strongylocin 2 (89 aa).

The signal sequence occupies residues 1–22 (MNIRTASFTFIVVMMILSQTMA). Positions 23–38 (DRFFNEPEEDDHLVES) are excised as a propeptide. Position 39 is a 6'-bromotryptophan (Trp39).

In terms of processing, contains 3 disulfide bonds.

In terms of biological role, has antimicrobial activity against Gram-negative bacteria and Gram-positive bacteria with minimum inhibitory concentration (MIC) between 0.78 uM and 3.13 uM. This is Strongylocin 2 from Echinus esculentus (Sea urchin).